Consider the following 178-residue polypeptide: Caveolin-1 (178 aa).

Position 2 is an N-acetylserine (Ser-2). Residue Ser-2 is modified to Phosphoserine. The interval Ser-2–Val-94 is required for homooligomerization. The Cytoplasmic segment spans residues Ser-2 to Ser-104. Residue Lys-5 is modified to N6-acetyllysine; alternate. Residue Lys-5 forms a Glycyl lysine isopeptide (Lys-Gly) (interchain with G-Cter in ubiquitin); alternate linkage. A Phosphotyrosine modification is found at Tyr-6. The residue at position 14 (Tyr-14) is a Phosphotyrosine; by ABL1. Tyr-25 carries the post-translational modification Phosphotyrosine. Glycyl lysine isopeptide (Lys-Gly) (interchain with G-Cter in ubiquitin) cross-links involve residues Lys-26, Lys-30, Lys-39, Lys-47, and Lys-57. An interaction with CAVIN3 region spans residues Asp-82–Val-94. Residues Ala-105–Leu-125 constitute an intramembrane region (helical). The Cytoplasmic portion of the chain corresponds to His-126 to Ile-178. An interacts with SPRY1, SPRY2, SPRY3 and SPRY4 region spans residues Val-131–Gln-142. 3 S-palmitoyl cysteine lipidation sites follow: Cys-133, Cys-143, and Cys-156. The interval Ser-149–Phe-160 is interacts with SPRY1, SPRY2, and SPRY4. Positions Phe-167–Ile-178 are interacts with SPRY1, SPRY2, SPRY3 and SPRY4.

Belongs to the caveolin family. Homooligomer. Interacts with GLIPR2. Interacts with NOSTRIN. Interacts with SNAP25 and STX1A. Interacts (via the N-terminus) with DPP4; the interaction is direct. Interacts with CTNNB1, CDH1 and JUP. Interacts with PACSIN2; this interaction induces membrane tubulation. Interacts with SLC7A9. Interacts with BMX and BTK. Interacts with TGFBR1. Interacts with CAVIN3 (via leucine-zipper domain) in a cholesterol-sensitive manner. Interacts with CAVIN1. Interacts with EHD2 in a cholesterol-dependent manner. Forms a ternary complex with UBXN6 and VCP; mediates CAV1 targeting to lysosomes for degradation. Interacts with ABCG1; this interaction regulates ABCG1-mediated cholesterol efflux. Interacts with NEU3; this interaction enhances NEU3 sialidase activity within caveola. Interacts (via C-terminus) with SPRY1, SPRY2 (via C-terminus), SPRY3, and SPRY4. Interacts with IGFBP5; this interaction allows trafficking of IGFBP5 from the plasma membrane to the nucleus. In terms of processing, phosphorylated at Tyr-14 by ABL1 in response to oxidative stress. Post-translationally, ubiquitinated. Undergo monoubiquitination and multi- and/or polyubiquitination. Monoubiquitination of N-terminal lysines promotes integration in a ternary complex with UBXN6 and VCP which promotes oligomeric CAV1 targeting to lysosomes for degradation. Ubiquitinated by ZNRF1; leading to degradation and modulation of the TLR4-mediated immune response.

The protein localises to the golgi apparatus membrane. It is found in the cell membrane. It localises to the membrane. Its subcellular location is the caveola. The protein resides in the membrane raft. Functionally, may act as a scaffolding protein within caveolar membranes. Forms a stable heterooligomeric complex with CAV2 that targets to lipid rafts and drives caveolae formation. Mediates the recruitment of CAVIN proteins (CAVIN1/2/3/4) to the caveolae. Interacts directly with G-protein alpha subunits and can functionally regulate their activity. Involved in the costimulatory signal essential for T-cell receptor (TCR)-mediated T-cell activation. Its binding to DPP4 induces T-cell proliferation and NF-kappa-B activation in a T-cell receptor/CD3-dependent manner. Recruits CTNNB1 to caveolar membranes and may regulate CTNNB1-mediated signaling through the Wnt pathway. Negatively regulates TGFB1-mediated activation of SMAD2/3 by mediating the internalization of TGFBR1 from membrane rafts leading to its subsequent degradation. Binds 20(S)-hydroxycholesterol (20(S)-OHC). The chain is Caveolin-1 (CAV1) from Ornithorhynchus anatinus (Duckbill platypus).